A 212-amino-acid chain; its full sequence is MIVIFLGPPGAGKGTQGKKIAKKIDLPHIAIGDIFRTIIKTSTSEAELINNYVRQGELIPNEIVNQVIKNFLLSFEYKNGYILDGYPRNLEQAQFFESFIKEKIKIIYFDVSGELLIKRILGRYSCKNCGKIYNRYFLQPKTDNVCDVCGSSTFDYRKDDNEEVIKKRIEVYKTETYPLIDYYKNSGNFYIVNGSKNEQEIAMDIQKILKIN.

10-15 (GAGKGT) is a binding site for ATP. Positions 30-59 (AIGDIFRTIIKTSTSEAELINNYVRQGELI) are NMP. Residues arginine 36, 57 to 59 (ELI), 85 to 88 (GYPR), and glutamine 92 contribute to the AMP site. An LID region spans residues 122 to 160 (GRYSCKNCGKIYNRYFLQPKTDNVCDVCGSSTFDYRKDD). Arginine 123 contacts ATP. Residues cysteine 126 and cysteine 129 each contribute to the Zn(2+) site. 132-133 (IY) is a binding site for ATP. 2 residues coordinate Zn(2+): cysteine 146 and cysteine 149. Residues arginine 157 and arginine 168 each coordinate AMP. Lysine 196 is a binding site for ATP.

This sequence belongs to the adenylate kinase family. Monomer.

It is found in the cytoplasm. It catalyses the reaction AMP + ATP = 2 ADP. It participates in purine metabolism; AMP biosynthesis via salvage pathway; AMP from ADP: step 1/1. Functionally, catalyzes the reversible transfer of the terminal phosphate group between ATP and AMP. Plays an important role in cellular energy homeostasis and in adenine nucleotide metabolism. The protein is Adenylate kinase of Rickettsia rickettsii (strain Iowa).